The sequence spans 78 residues: Large ribosomal subunit protein bL28 (78 aa).

The protein belongs to the bacterial ribosomal protein bL28 family.

The polypeptide is Large ribosomal subunit protein bL28 (Prochlorococcus marinus (strain MIT 9303)).